The chain runs to 540 residues: Chaperonin GroEL (540 aa).

ATP is bound by residues Thr30–Pro33, Lys51, Asp87–Thr91, Gly415, Asn479–Ala481, and Asp495.

It belongs to the chaperonin (HSP60) family. In terms of assembly, forms a cylinder of 14 subunits composed of two heptameric rings stacked back-to-back. Interacts with the co-chaperonin GroES.

It is found in the cytoplasm. The enzyme catalyses ATP + H2O + a folded polypeptide = ADP + phosphate + an unfolded polypeptide.. In terms of biological role, together with its co-chaperonin GroES, plays an essential role in assisting protein folding. The GroEL-GroES system forms a nano-cage that allows encapsulation of the non-native substrate proteins and provides a physical environment optimized to promote and accelerate protein folding. The protein is Chaperonin GroEL of Pluralibacter gergoviae (Enterobacter gergoviae).